The primary structure comprises 504 residues: Prenylcysteine oxidase 1 (504 aa).

Residues 1 to 28 (MGRFAATLVGSLFGLGLLLCGLGRLASA) form the signal peptide. N-linked (GlcNAc...) asparagine glycans are attached at residues asparagine 196, asparagine 322, and asparagine 352.

It belongs to the prenylcysteine oxidase family. FAD serves as cofactor. As to expression, expressed mainly in cerebrum.

It localises to the lysosome. The catalysed reaction is an S-polyprenyl-L-cysteine + O2 + H2O = a polyprenal + L-cysteine + H2O2. The enzyme catalyses S-(2E,6E)-farnesyl-L-cysteine + O2 + H2O = (2E,6E)-farnesal + L-cysteine + H2O2. It catalyses the reaction [(2E,6E,10E)-geranylgeranyl]-L-cysteine + O2 + H2O = (2E,6E,10E)-geranylgeranial + L-cysteine + H2O2. Its function is as follows. Prenylcysteine oxidase that cleaves the thioether bond of prenyl-L-cysteines, such as farnesylcysteine and geranylgeranylcysteine. Only active against free prenylcysteines and not prenylcysteine residues within prenylated proteins or peptides. Involved in the final step in the degradation of prenylated proteins, by degrading prenylcysteines after the protein has been degraded. In Rattus norvegicus (Rat), this protein is Prenylcysteine oxidase 1.